The following is a 106-amino-acid chain: Pyruvate decarboxylase 2 (106 aa).

Mg(2+)-binding residues include Asn10 and Gly12.

This sequence belongs to the TPP enzyme family. In terms of assembly, homotetramer. It depends on a metal cation as a cofactor. Thiamine diphosphate is required as a cofactor.

The enzyme catalyses a 2-oxocarboxylate + H(+) = an aldehyde + CO2. In Zea mays (Maize), this protein is Pyruvate decarboxylase 2 (PDC2).